The following is a 459-amino-acid chain: MRLGLLMFLPLLLLATRYRAVTALSYDPTWESLDRRPLPAWFDQAKFGIFIHWGVFSVPSFGSEWFWWYWQKERRPKFVDFMDNNYPPGFKYEDFGVLFTAKYFNANQWADLLQASGAKYVVLTSKHHEGFTLWGSAHSWNWNAVDEGPKRDIVKELEVAVRNRTDLHFGLYYSLFEWFHPLFLEDQSSAFQKQRFPVAKTLPELYELVTKYQPEVLWSDGDGGAPDHYWNSTDFLAWLYNESPVRDTVVTNDRWGAGSICKHGGYYTCSDRYNPGHLLPHKWENCMTIDKFSWGYRREAEIGDYLTIEELVKQLVETVSCGGNLLMNIGPTLDGIIPVIFEERLRQMGTWLKVNGEAIYETHTWRSQNDTVTPDVWYTSKPEKKLVYAIFLKWPISGKLFLGQPIGSLGETEVELLGHGRPLTWTSSKPSGIVVELPRLSVHQMPCKWGWTLALTNVT.

Residues 1–23 (MRLGLLMFLPLLLLATRYRAVTA) form the signal peptide. N-linked (GlcNAc...) asparagine glycans are attached at residues N163 and N231. Phosphoserine is present on S293. A glycan (N-linked (GlcNAc...) asparagine) is linked at N369.

The protein belongs to the glycosyl hydrolase 29 family. As to quaternary structure, homotetramer.

It localises to the secreted. It catalyses the reaction an alpha-L-fucoside + H2O = L-fucose + an alcohol. Alpha-L-fucosidase is responsible for hydrolyzing the alpha-1,6-linked fucose joined to the reducing-end N-acetylglucosamine of the carbohydrate moieties of glycoproteins. The chain is Plasma alpha-L-fucosidase (Fuca2) from Rattus norvegicus (Rat).